The sequence spans 487 residues: ATP-dependent RNA helicase DBP3 (487 aa).

The disordered stretch occupies residues Met-1–Asp-40. The Q motif motif lies at Thr-71–Ser-98. One can recognise a Helicase ATP-binding domain in the interval Trp-101–Val-276. ATP is bound at residue Ala-114–Thr-121. A DEAD box motif is present at residues Asp-222 to Asp-225. A Helicase C-terminal domain is found at Arg-291–Gly-456.

This sequence belongs to the DEAD box helicase family. DDX5/DBP2 subfamily.

It is found in the nucleus. The protein localises to the nucleolus. It catalyses the reaction ATP + H2O = ADP + phosphate + H(+). Its function is as follows. ATP-dependent RNA helicase required for 60S ribosomal subunit synthesis. Involved in efficient pre-rRNA processing, predominantly at site A3, which is necessary for the normal formation of 25S and 5.8S rRNAs. The polypeptide is ATP-dependent RNA helicase DBP3 (DBP3) (Ajellomyces capsulatus (strain NAm1 / WU24) (Darling's disease fungus)).